Reading from the N-terminus, the 259-residue chain is 5'-nucleotidase SurE (259 aa).

Residues Asp-8, Asp-9, Ser-40, and Asn-95 each coordinate a divalent metal cation.

Belongs to the SurE nucleotidase family. Requires a divalent metal cation as cofactor.

The protein localises to the cytoplasm. The catalysed reaction is a ribonucleoside 5'-phosphate + H2O = a ribonucleoside + phosphate. Nucleotidase that shows phosphatase activity on nucleoside 5'-monophosphates. The protein is 5'-nucleotidase SurE of Oleidesulfovibrio alaskensis (strain ATCC BAA-1058 / DSM 17464 / G20) (Desulfovibrio alaskensis).